The following is a 266-amino-acid chain: 4-diphosphocytidyl-2-C-methyl-D-erythritol kinase (266 aa).

Lys-11 is an active-site residue. Residue Pro-103 to Ser-113 coordinates ATP. The active site involves Asp-145.

It belongs to the GHMP kinase family. IspE subfamily.

The catalysed reaction is 4-CDP-2-C-methyl-D-erythritol + ATP = 4-CDP-2-C-methyl-D-erythritol 2-phosphate + ADP + H(+). Its pathway is isoprenoid biosynthesis; isopentenyl diphosphate biosynthesis via DXP pathway; isopentenyl diphosphate from 1-deoxy-D-xylulose 5-phosphate: step 3/6. In terms of biological role, catalyzes the phosphorylation of the position 2 hydroxy group of 4-diphosphocytidyl-2C-methyl-D-erythritol. The sequence is that of 4-diphosphocytidyl-2-C-methyl-D-erythritol kinase from Sulfurimonas denitrificans (strain ATCC 33889 / DSM 1251) (Thiomicrospira denitrificans (strain ATCC 33889 / DSM 1251)).